Here is a 72-residue protein sequence, read N- to C-terminus: uncharacterized protein (72 aa).

Positions 51 to 72 (AKGGRQKGEVVGVDDQCKEHKE) are disordered.

Belongs to the YiiE family.

This is an uncharacterized protein from Escherichia coli O157:H7.